Here is a 439-residue protein sequence, read N- to C-terminus: tRNA modification GTPase MnmE (439 aa).

(6S)-5-formyl-5,6,7,8-tetrahydrofolate contacts are provided by Arg-26, Glu-88, and Arg-127. The 148-residue stretch at 220-367 (GARLALIGRP…LRDAIHTALI (148 aa)) folds into the TrmE-type G domain. Residue Asn-230 coordinates K(+). Residues 230–235 (NAGKSS), 249–255 (TPIPGTT), and 274–277 (DTAG) each bind GTP. Ser-234 is a binding site for Mg(2+). K(+) is bound by residues Thr-249, Ile-251, and Thr-254. Residue Thr-255 coordinates Mg(2+). A (6S)-5-formyl-5,6,7,8-tetrahydrofolate-binding site is contributed by Lys-439.

This sequence belongs to the TRAFAC class TrmE-Era-EngA-EngB-Septin-like GTPase superfamily. TrmE GTPase family. Homodimer. Heterotetramer of two MnmE and two MnmG subunits. It depends on K(+) as a cofactor.

The protein resides in the cytoplasm. In terms of biological role, exhibits a very high intrinsic GTPase hydrolysis rate. Involved in the addition of a carboxymethylaminomethyl (cmnm) group at the wobble position (U34) of certain tRNAs, forming tRNA-cmnm(5)s(2)U34. This is tRNA modification GTPase MnmE from Deinococcus geothermalis (strain DSM 11300 / CIP 105573 / AG-3a).